A 163-amino-acid polypeptide reads, in one-letter code: Nucleotide-binding protein RER_17110 (163 aa).

This sequence belongs to the YajQ family.

Functionally, nucleotide-binding protein. The polypeptide is Nucleotide-binding protein RER_17110 (Rhodococcus erythropolis (strain PR4 / NBRC 100887)).